The chain runs to 736 residues: MSRILVEDDNATPFHSMEIISSSLTLGQLLKNVSDVRKVEVGDETPVHEFFDRDGSSLDGDNDHLMRPVPFVLSFNNLTYNVSVRRKLDFHDLVPWRRTSFSKTKTLLDNISGETRDGEILAVLGASGSGKSTLIDALANRIAKGSLKGTVTLNGEALQSRMLKVISAYVMQDDLLFPMLTVEETLMFAAEFRLPRSLPKSKKKLRVQALIDQLGIRNAAKTIIGDEGHRGISGGERRRVSIGIDIIHDPIVLFLDEPTSGLDSTSAFMVVKVLKRIAESGSIIIMSIHQPSHRVLSLLDRLIFLSRGHTVFSGSPASLPSFFAGFGNPIPENENQTEFALDLIRELEGSAGGTRGLVEFNKKWQEMKKQSNPQTLTPPASPNPNLTLKEAISASISRGKLVSGGGGGSSVINHGGGTLAVPAFANPFWIEIKTLTRRSILNSRRQPELLGMRLATVIVTGFILATVFWRLDNSPKGVQERLGFFAFAMSTMFYTCADALPVFLQERYIFMRETAYNAYRRSSYVLSHAIVTFPSLIFLSLAFAVTTFWAVGLEGGLMGFLFYCLIILASFWSGSSFVTFLSGVVPHVMLGYTIVVAILAYFLLFSGFFINRDRIPQYWIWFHYLSLVKYPYEAVLQNEFSDPTECFVRGVQLFDNSPLGELTYGMKLRLLDSVSRSIGMRISSSTCLTTGADVLKQQGVTQLSKWNCLLITVGFGFLFRILFYLCLLLGSKNKRR.

Positions 88-332 (LDFHDLVPWR…FAGFGNPIPE (245 aa)) constitute an ABC transporter domain. 125 to 132 (GASGSGKS) is an ATP binding site. 7 consecutive transmembrane segments (helical) span residues 410-430 (SVINHGGGTLAVPAFANPFWI), 449-469 (LLGMRLATVIVTGFILATVFW), 484-504 (FFAFAMSTMFYTCADALPVFL), 525-545 (VLSHAIVTFPSLIFLSLAFAV), 569-589 (ASFWSGSSFVTFLSGVVPHVM), 590-610 (LGYTIVVAILAYFLLFSGFFI), and 709-729 (LLITVGFGFLFRILFYLCLLL). The ABC transmembrane type-2 domain maps to 430-640 (IEIKTLTRRS…PYEAVLQNEF (211 aa)).

Belongs to the ABC transporter superfamily. ABCG family. Eye pigment precursor importer (TC 3.A.1.204) subfamily.

The protein resides in the membrane. This Arabidopsis thaliana (Mouse-ear cress) protein is ABC transporter G family member 16 (ABCG16).